We begin with the raw amino-acid sequence, 806 residues long: Centrosomal protein of 85 kDa-like (806 aa).

Disordered regions lie at residues 1–27, 51–89, and 101–146; these read MWGR…AGSD, NNHL…LSFK, and HVMP…SSLD. Position 15 is a phosphoserine (Ser15). The segment covering 60–74 has biased composition (polar residues); that stretch reads TSDSGDTGIGTSCSD. Residues 135 to 146 are compositionally biased toward basic and acidic residues; that stretch reads DHSRGERDSSLD. Ser207 is modified (phosphoserine). The tract at residues 308–353 is disordered; sequence PLEGRTTDDSYSLAPWQQPQTEEFQQGSETPMQVLTGSSRQSYSPP. Over residues 322–351 the composition is skewed to polar residues; that stretch reads PWQQPQTEEFQQGSETPMQVLTGSSRQSYS. Positions 442–644 form a coiled coil; it reads QEELEQKLAS…ILEIQSMQGK (203 aa).

It belongs to the CEP85 family.

The protein localises to the cytoplasm. Its subcellular location is the cytoskeleton. It localises to the microtubule organizing center. The protein resides in the centrosome. Functionally, plays an essential role in neuronal cell migration. The protein is Centrosomal protein of 85 kDa-like of Mus musculus (Mouse).